The sequence spans 468 residues: ATP synthase subunit beta (468 aa).

Residue 155–162 participates in ATP binding; that stretch reads GGAGVGKT.

This sequence belongs to the ATPase alpha/beta chains family. In terms of assembly, F-type ATPases have 2 components, CF(1) - the catalytic core - and CF(0) - the membrane proton channel. CF(1) has five subunits: alpha(3), beta(3), gamma(1), delta(1), epsilon(1). CF(0) has three main subunits: a(1), b(2) and c(9-12). The alpha and beta chains form an alternating ring which encloses part of the gamma chain. CF(1) is attached to CF(0) by a central stalk formed by the gamma and epsilon chains, while a peripheral stalk is formed by the delta and b chains.

The protein resides in the cell membrane. The enzyme catalyses ATP + H2O + 4 H(+)(in) = ADP + phosphate + 5 H(+)(out). Functionally, produces ATP from ADP in the presence of a proton gradient across the membrane. The catalytic sites are hosted primarily by the beta subunits. This is ATP synthase subunit beta from Bacillus cereus (strain B4264).